A 733-amino-acid polypeptide reads, in one-letter code: Phosphoribosylformylglycinamidine synthase subunit PurL (733 aa).

His32 is an active-site residue. Tyr35 is a binding site for ATP. Glu81 is a Mg(2+) binding site. Residues 82–85 and Arg104 contribute to the substrate site; that span reads SHNH. His83 (proton acceptor) is an active-site residue. Asp105 serves as a coordination point for Mg(2+). Gln230 serves as a coordination point for substrate. A Mg(2+)-binding site is contributed by Asp258. Position 301–303 (301–303) interacts with substrate; the sequence is ESQ. ATP-binding residues include Asp482 and Gly519. Mg(2+) is bound at residue Asn520. Ser522 is a substrate binding site.

The protein belongs to the FGAMS family. In terms of assembly, monomer. Part of the FGAM synthase complex composed of 1 PurL, 1 PurQ and 2 PurS subunits.

It is found in the cytoplasm. It carries out the reaction N(2)-formyl-N(1)-(5-phospho-beta-D-ribosyl)glycinamide + L-glutamine + ATP + H2O = 2-formamido-N(1)-(5-O-phospho-beta-D-ribosyl)acetamidine + L-glutamate + ADP + phosphate + H(+). It participates in purine metabolism; IMP biosynthesis via de novo pathway; 5-amino-1-(5-phospho-D-ribosyl)imidazole from N(2)-formyl-N(1)-(5-phospho-D-ribosyl)glycinamide: step 1/2. Part of the phosphoribosylformylglycinamidine synthase complex involved in the purines biosynthetic pathway. Catalyzes the ATP-dependent conversion of formylglycinamide ribonucleotide (FGAR) and glutamine to yield formylglycinamidine ribonucleotide (FGAM) and glutamate. The FGAM synthase complex is composed of three subunits. PurQ produces an ammonia molecule by converting glutamine to glutamate. PurL transfers the ammonia molecule to FGAR to form FGAM in an ATP-dependent manner. PurS interacts with PurQ and PurL and is thought to assist in the transfer of the ammonia molecule from PurQ to PurL. This is Phosphoribosylformylglycinamidine synthase subunit PurL from Methanocaldococcus jannaschii (strain ATCC 43067 / DSM 2661 / JAL-1 / JCM 10045 / NBRC 100440) (Methanococcus jannaschii).